The chain runs to 331 residues: MGTPQKDVIIKSDAPDTLLLEKHADYIASYGSKKDDYEYCMSEYLRMSGIYWGLTVMDLMGQLHRMNREEILAFIKSCQHECGGISASIGHDPHLLYTLSAVQILTLYDSINVIDVNKVVEYVKGLQKEDGSFAGDIWGEIDTRFSFCAVATLALLGKLDAINVEKAIEFVLSCMNFDGGFGCRPGSESHAGQIYCCTGFLAITSQLHQVNSDLLGWWLCERQLPSGGLNGRPEKLPDVCYSWWVLASLKIIGRLHWIDREKLRNFILACQDEETGGFADRPGDMVDPFHTLFGIAGLSLLGEEQIKPVNPVFCMPEEVLQRVNVQPELVS.

At G2 the chain carries N-acetylglycine. T3 bears the Phosphothreonine mark. 6 PFTB repeats span residues 20–61, 68–109, 116–157, 164–205, 212–253, and 260–302; these read LEKH…DLMG, REEI…TLYD, VNKV…ALLG, VEKA…AITS, SDLL…KIIG, and REKL…SLLG. Residue 190 to 192 coordinates geranylgeranyl diphosphate; that stretch reads HAG. Positions 238 and 240 each coordinate Zn(2+). 241 to 244 provides a ligand contact to geranylgeranyl diphosphate; that stretch reads YSWW. Residue H290 participates in Zn(2+) binding.

Belongs to the protein prenyltransferase subunit beta family. As to quaternary structure, heterotrimer composed of RABGGTA, RABGGTB and CHM; within this trimer, RABGGTA and RABGGTB form the catalytic component B, while CHM (component A) mediates peptide substrate binding. The Rab GGTase dimer (RGGT) interacts with CHM (component A) prior to Rab protein binding; the association is stabilized by geranylgeranyl pyrophosphate (GGpp). The CHM:RGGT:Rab complex is destabilized by GGpp. Interaction of RABGGTB with prenylated PTP4A2 precludes its association with RABGGTA and inhibits enzyme activity. Interacts with CHODL. Interacts with non-phosphorylated form of RAB8A; phosphorylation of RAB8A at 'Thr-72' disrupts this interaction. Zn(2+) is required as a cofactor.

It carries out the reaction geranylgeranyl diphosphate + L-cysteinyl-[protein] = S-geranylgeranyl-L-cysteinyl-[protein] + diphosphate. Its activity is regulated as follows. The enzymatic reaction requires the aid of a Rab escort protein (also called component A). Its function is as follows. Catalyzes the transfer of a geranylgeranyl moiety from geranylgeranyl diphosphate to both cysteines of Rab proteins with the C-terminal sequence -XXCC, -XCXC and -CCXX, such as RAB1A, RAB3A, RAB5A and RAB7A. This is Geranylgeranyl transferase type-2 subunit beta (RABGGTB) from Homo sapiens (Human).